Here is a 493-residue protein sequence, read N- to C-terminus: Xaa-Pro dipeptidase (493 aa).

Ala2 is subject to N-acetylalanine. At Ser167 the chain carries Phosphoserine. His255 contributes to the a dipeptide binding site. Mn(2+) is bound by residues Asp276, Asp287, and His370. Position 287 (Asp287) interacts with a dipeptide. 2 residues coordinate a dipeptide: His377 and Arg398. Glu412 and Glu452 together coordinate Mn(2+).

It belongs to the peptidase M24B family. Eukaryotic-type prolidase subfamily. In terms of assembly, homodimer. Mn(2+) serves as cofactor.

The enzyme catalyses Xaa-L-Pro dipeptide + H2O = an L-alpha-amino acid + L-proline. Specifically inhibited by the pseudodipeptide CQ31. Inhibition by CQ31 indirectly activates the CARD8 inflammasome: dipeptide accumulation following PEPD inactivation weaky inhibit dipeptidyl peptidases DDP8 and DPP9, relieving DPP8- and/or DPP9-mediated inhibition of CARD8. Its function is as follows. Dipeptidase that catalyzes the hydrolysis of dipeptides with a prolyl (Xaa-Pro) or hydroxyprolyl residue in the C-terminal position. The preferred dipeptide substrate is Gly-Pro, but other Xaa-Pro dipeptides, such as Ala-Pro, Met-Pro, Phe-Pro, Val-Pro and Leu-Pro, can be cleaved. Plays an important role in collagen metabolism because the high level of iminoacids in collagen. The polypeptide is Xaa-Pro dipeptidase (Homo sapiens (Human)).